We begin with the raw amino-acid sequence, 127 residues long: Large ribosomal subunit protein bL20 (127 aa).

Belongs to the bacterial ribosomal protein bL20 family.

Functionally, binds directly to 23S ribosomal RNA and is necessary for the in vitro assembly process of the 50S ribosomal subunit. It is not involved in the protein synthesizing functions of that subunit. This is Large ribosomal subunit protein bL20 from Corynebacterium diphtheriae (strain ATCC 700971 / NCTC 13129 / Biotype gravis).